We begin with the raw amino-acid sequence, 119 residues long: Single-stranded DNA-binding protein (119 aa).

In terms of domain architecture, SSB spans 3 to 102 (INIVTLVGRV…IRVDQLELLG (100 aa)).

Homotetramer.

The sequence is that of Single-stranded DNA-binding protein (ssb1) from Anabaena variabilis.